A 214-amino-acid chain; its full sequence is Ribosomal RNA small subunit methyltransferase G (214 aa).

S-adenosyl-L-methionine-binding positions include Gly81, Met86, 132-133, and Arg147; that span reads AE.

The protein belongs to the methyltransferase superfamily. RNA methyltransferase RsmG family.

The protein resides in the cytoplasm. It carries out the reaction guanosine(527) in 16S rRNA + S-adenosyl-L-methionine = N(7)-methylguanosine(527) in 16S rRNA + S-adenosyl-L-homocysteine. Specifically methylates the N7 position of guanine in position 527 of 16S rRNA. The chain is Ribosomal RNA small subunit methyltransferase G from Pseudomonas syringae pv. syringae (strain B728a).